The following is a 1199-amino-acid chain: Tubulin-specific chaperone D (1199 aa).

2 disordered regions span residues 1-23 (MALSEEPAAGAAEDPVEDPVEDA) and 337-361 (QHSIQNPREPVTQAETPDSDGQDDV). Residues 14–23 (DPVEDPVEDA) are compositionally biased toward acidic residues. HEAT repeat units follow at residues 368-406 (VIEQLLVGLKDKDTIVRWSAAKGIGRMAGRLPKELADDV), 603-639 (EHTAREVFPRLLSMTQSPDLHTRHGAVLACAEVARSL), 757-793 (AAAQEELVKLYLAELQSPEEMTRCGCALALGALPAFF), and 1111-1147 (GDVRRKVLLQLFLLLCHPFPVIRKNTASQVYEMVLTY).

Belongs to the TBCD family. As to quaternary structure, found in a complex with at least ARL2, PPP2CB, PPP2R1A, PPP2R2A, PPP2R5E and TBCD. Interacts with PPP2CB. Part of a supercomplex made of cofactors A to E. Cofactors A and D function by capturing and stabilizing tubulin in a quasi-native conformation. Cofactor E binds to the cofactor D-tubulin complex; interaction with cofactor C then causes the release of tubulin polypeptides that are committed to the native state. Interacts with ARL2; interaction is enhanced with the GDP-bound form of ARL2. Does not interact with ARL3, ARL4A and ARL4D. Interacts with beta tubulin. Interacts with TBCE.

The protein localises to the cell junction. The protein resides in the tight junction. It is found in the lateral cell membrane. It localises to the cytoplasm. Its subcellular location is the adherens junction. The protein localises to the cytoskeleton. The protein resides in the microtubule organizing center. It is found in the centrosome. In terms of biological role, tubulin-folding protein implicated in the first step of the tubulin folding pathway and required for tubulin complex assembly. Involved in the regulation of microtubule polymerization or depolymerization, it modulates microtubule dynamics by capturing GTP-bound beta-tubulin (TUBB). Its ability to interact with beta tubulin is regulated via its interaction with ARL2. Acts as a GTPase-activating protein (GAP) for ARL2. Induces microtubule disruption in absence of ARL2. Increases degradation of beta tubulin, when overexpressed in polarized cells. Promotes epithelial cell detachment, a process antagonized by ARL2. Induces tight adherens and tight junctions disassembly at the lateral cell membrane. Required for correct assembly and maintenance of the mitotic spindle, and proper progression of mitosis. Involved in neuron morphogenesis. This Bos taurus (Bovine) protein is Tubulin-specific chaperone D (TBCD).